We begin with the raw amino-acid sequence, 351 residues long: UDP-N-acetylglucosamine--N-acetylmuramyl-(pentapeptide) pyrophosphoryl-undecaprenol N-acetylglucosamine transferase (351 aa).

UDP-N-acetyl-alpha-D-glucosamine contacts are provided by residues 12 to 14 (TGG), Asn-124, Arg-160, Ser-188, Ile-239, 258 to 263 (ALTVCE), and Gln-283.

The protein belongs to the glycosyltransferase 28 family. MurG subfamily.

Its subcellular location is the cell inner membrane. It catalyses the reaction di-trans,octa-cis-undecaprenyl diphospho-N-acetyl-alpha-D-muramoyl-L-alanyl-D-glutamyl-meso-2,6-diaminopimeloyl-D-alanyl-D-alanine + UDP-N-acetyl-alpha-D-glucosamine = di-trans,octa-cis-undecaprenyl diphospho-[N-acetyl-alpha-D-glucosaminyl-(1-&gt;4)]-N-acetyl-alpha-D-muramoyl-L-alanyl-D-glutamyl-meso-2,6-diaminopimeloyl-D-alanyl-D-alanine + UDP + H(+). It participates in cell wall biogenesis; peptidoglycan biosynthesis. In terms of biological role, cell wall formation. Catalyzes the transfer of a GlcNAc subunit on undecaprenyl-pyrophosphoryl-MurNAc-pentapeptide (lipid intermediate I) to form undecaprenyl-pyrophosphoryl-MurNAc-(pentapeptide)GlcNAc (lipid intermediate II). In Glaesserella parasuis serovar 5 (strain SH0165) (Haemophilus parasuis), this protein is UDP-N-acetylglucosamine--N-acetylmuramyl-(pentapeptide) pyrophosphoryl-undecaprenol N-acetylglucosamine transferase.